A 208-amino-acid chain; its full sequence is Thymidylate kinase (208 aa).

10–17 contributes to the ATP binding site; that stretch reads GLEGAGKS.

Belongs to the thymidylate kinase family.

The catalysed reaction is dTMP + ATP = dTDP + ADP. Phosphorylation of dTMP to form dTDP in both de novo and salvage pathways of dTTP synthesis. This chain is Thymidylate kinase, found in Glaesserella parasuis serovar 5 (strain SH0165) (Haemophilus parasuis).